A 502-amino-acid polypeptide reads, in one-letter code: Ubiquitin-associated protein 1 (502 aa).

The interval 1 to 95 is interaction with ESCRT-I; sequence MASKKLGADF…AEAKVNSKSG (95 aa). A UMA domain is found at 17-63; that stretch reads LDDVPFKTGDKFKTPAKVGLPIGFSLPDCLQVVREVQYDFSLEKKTI. The span at 86–100 shows a compositional bias: basic and acidic residues; that stretch reads AEAKVNSKSGPEGDS. Residues 86-117 are disordered; that stretch reads AEAKVNSKSGPEGDSKMSFSKTHSTATMPPPI. The segment covering 102–112 has biased composition (polar residues); the sequence is MSFSKTHSTAT. Phosphoserine occurs at positions 146, 205, and 289. Residues 260–290 form an interaction with PTPN23 region; the sequence is VSNIKSLSFPKLDSDDSNQKTAKLASTFHST. UBA domains lie at 389–430 and 451–498; these read SPSE…LFAH and QCSE…LMAR.

Component of an ESCRT-I complex (endosomal sorting complex required for transport I) which consists of TSG101, VPS28, VPS37A and UBAP1 in a 1:1:1:1 stoichiometry. Interacts with PTPN23. Interacts (via UBA domains) with ubiquitinated proteins. Ubiquitous. Highly expressed in heart, brain, placenta, lung, liver, skeletal muscle and pancreas.

Its subcellular location is the cytoplasm. The protein resides in the cytosol. It localises to the endosome. Its function is as follows. Component of the ESCRT-I complex, a regulator of vesicular trafficking process. Binds to ubiquitinated cargo proteins and is required for the sorting of endocytic ubiquitinated cargos into multivesicular bodies (MVBs). Plays a role in the proteasomal degradation of ubiquitinated cell-surface proteins, such as EGFR and BST2. This Homo sapiens (Human) protein is Ubiquitin-associated protein 1.